The sequence spans 538 residues: Bifunctional purine biosynthesis protein PurH (538 aa).

The 151-residue stretch at 8–158 folds into the MGS-like domain; the sequence is FPIPDLHRVR…KNHVYTGVIT (151 aa).

It belongs to the PurH family.

It catalyses the reaction (6R)-10-formyltetrahydrofolate + 5-amino-1-(5-phospho-beta-D-ribosyl)imidazole-4-carboxamide = 5-formamido-1-(5-phospho-D-ribosyl)imidazole-4-carboxamide + (6S)-5,6,7,8-tetrahydrofolate. It carries out the reaction IMP + H2O = 5-formamido-1-(5-phospho-D-ribosyl)imidazole-4-carboxamide. It participates in purine metabolism; IMP biosynthesis via de novo pathway; 5-formamido-1-(5-phospho-D-ribosyl)imidazole-4-carboxamide from 5-amino-1-(5-phospho-D-ribosyl)imidazole-4-carboxamide (10-formyl THF route): step 1/1. Its pathway is purine metabolism; IMP biosynthesis via de novo pathway; IMP from 5-formamido-1-(5-phospho-D-ribosyl)imidazole-4-carboxamide: step 1/1. The protein is Bifunctional purine biosynthesis protein PurH of Bartonella henselae (strain ATCC 49882 / DSM 28221 / CCUG 30454 / Houston 1) (Rochalimaea henselae).